We begin with the raw amino-acid sequence, 506 residues long: BTB/POZ domain-containing protein 16 (506 aa).

The BTB domain maps to 150-206 (INDPAVTRVAFALALKNLYMNEVEMTVDNVLGVLASAHILQFNRLFRKCVSTMLNRL).

This chain is BTB/POZ domain-containing protein 16 (Btbd16), found in Rattus norvegicus (Rat).